The sequence spans 383 residues: Acetylornithine deacetylase (383 aa).

A Zn(2+)-binding site is contributed by H80. The active site involves D82. D112 is a binding site for Zn(2+). E144 is an active-site residue. Zn(2+) contacts are provided by E145, E169, and H355.

It belongs to the peptidase M20A family. ArgE subfamily. Homodimer. The cofactor is Zn(2+). Co(2+) serves as cofactor. Requires glutathione as cofactor.

It localises to the cytoplasm. It catalyses the reaction N(2)-acetyl-L-ornithine + H2O = L-ornithine + acetate. It functions in the pathway amino-acid biosynthesis; L-arginine biosynthesis; L-ornithine from N(2)-acetyl-L-ornithine (linear): step 1/1. In terms of biological role, catalyzes the hydrolysis of the amide bond of N(2)-acetylated L-amino acids. Cleaves the acetyl group from N-acetyl-L-ornithine to form L-ornithine, an intermediate in L-arginine biosynthesis pathway, and a branchpoint in the synthesis of polyamines. This Shigella dysenteriae serotype 1 (strain Sd197) protein is Acetylornithine deacetylase.